We begin with the raw amino-acid sequence, 661 residues long: Serine/threonine-protein phosphatase rdgC (661 aa).

Positions arginine 7 to glutamine 32 constitute an IQ domain. A catalytic region spans residues isoleucine 105–serine 413. Mn(2+) contacts are provided by aspartate 158, histidine 160, aspartate 187, and asparagine 219. The active-site Proton donor is histidine 220. Mn(2+) is bound by residues histidine 271 and histidine 360. 3 EF-hand domains span residues aspartate 441 to leucine 476, alanine 526 to histidine 561, and tyrosine 566 to histidine 601. Residues aspartate 539, aspartate 541, serine 543, glutamate 545, glutamate 550, aspartate 579, asparagine 581, aspartate 583, lysine 585, and glutamate 590 each coordinate Ca(2+). The tract at residues glutamine 606 to threonine 625 is disordered.

This sequence belongs to the PPP phosphatase family. Requires Mn(2+) as cofactor. As to expression, expressed in the visual system of the fly, as well as in the mushroom bodies of the central brain.

The catalysed reaction is O-phospho-L-seryl-[protein] + H2O = L-seryl-[protein] + phosphate. It catalyses the reaction O-phospho-L-threonyl-[protein] + H2O = L-threonyl-[protein] + phosphate. Functionally, phosphatase required to prevent light-induced retinal degeneration. The sequence is that of Serine/threonine-protein phosphatase rdgC (rdgC) from Drosophila melanogaster (Fruit fly).